A 390-amino-acid polypeptide reads, in one-letter code: Mevalonate kinase (390 aa).

Residues Lys16, Ser130, and Gly135–Ser141 each bind ATP. 2 residues coordinate Mg(2+): Ser141 and Glu193. Asp204 (proton acceptor) is an active-site residue.

Belongs to the GHMP kinase family. Mevalonate kinase subfamily. Requires Mg(2+) as cofactor.

The protein localises to the cytoplasm. The enzyme catalyses (R)-mevalonate + ATP = (R)-5-phosphomevalonate + ADP + H(+). It participates in isoprenoid biosynthesis; isopentenyl diphosphate biosynthesis via mevalonate pathway; isopentenyl diphosphate from (R)-mevalonate: step 1/3. Catalyzes the phosphorylation of mevalonate to mevalonate 5-phosphate, a key step in isoprenoid biosynthesis. The protein is Mevalonate kinase of Dictyostelium discoideum (Social amoeba).